Consider the following 184-residue polypeptide: MKKLSILAALAASPAMAATGPFFSLSNTNFIVTLAFLIFMGILVYAKVPGRILGMLDRRAVQIRSELEEARALREEARTILASYDRKQKEVQEQAARIVASARDEAQAAAEQAKADLKASIARRLAAAEDQIASAEAGAVRAIREQAISVAVAAASDVLARQMTPAATSASIDESIKEVEARFH.

The helical transmembrane segment at 4–24 threads the bilayer; that stretch reads LSILAALAASPAMAATGPFFS.

Belongs to the ATPase B chain family. As to quaternary structure, F-type ATPases have 2 components, F(1) - the catalytic core - and F(0) - the membrane proton channel. F(1) has five subunits: alpha(3), beta(3), gamma(1), delta(1), epsilon(1). F(0) has three main subunits: a(1), b(2) and c(10-14). The alpha and beta chains form an alternating ring which encloses part of the gamma chain. F(1) is attached to F(0) by a central stalk formed by the gamma and epsilon chains, while a peripheral stalk is formed by the delta and b chains.

The protein localises to the cell inner membrane. In terms of biological role, f(1)F(0) ATP synthase produces ATP from ADP in the presence of a proton or sodium gradient. F-type ATPases consist of two structural domains, F(1) containing the extramembraneous catalytic core and F(0) containing the membrane proton channel, linked together by a central stalk and a peripheral stalk. During catalysis, ATP synthesis in the catalytic domain of F(1) is coupled via a rotary mechanism of the central stalk subunits to proton translocation. Its function is as follows. Component of the F(0) channel, it forms part of the peripheral stalk, linking F(1) to F(0). This is ATP synthase subunit b 1 from Cereibacter sphaeroides (strain ATCC 17025 / ATH 2.4.3) (Rhodobacter sphaeroides).